The following is a 962-amino-acid chain: Oncostatin-M-specific receptor subunit beta (962 aa).

The N-terminal stretch at 1–28 (MAFSVVLHQVTFLLAVLSLRTSQSKVLG) is a signal peptide. Residues 29-738 (EPLQLTPEIH…VTTPDVRSHM (710 aa)) are Extracellular-facing. Asn219 is a glycosylation site (N-linked (GlcNAc...) asparagine). Fibronectin type-III domains are found at residues 237 to 332 (EPKN…VHPK), 333 to 426 (APHD…TPEA), 428 to 527 (PSEA…SGHE), 528 to 621 (EVHE…TQEL), and 623 to 734 (PSVN…TPDV). Cysteines 243 and 253 form a disulfide. Asn324 carries N-linked (GlcNAc...) asparagine glycosylation. Positions 413–417 (WSDWM) match the WSXWS motif motif. Asn492, Asn578, and Asn723 each carry an N-linked (GlcNAc...) asparagine glycan. The chain crosses the membrane as a helical span at residues 739–759 (LLQIILPMTLGVFLSIIVCYW). The Cytoplasmic portion of the chain corresponds to 760-962 (KSQWVKEKCY…ASLKENNLTS (203 aa)). Positions 768–776 (CYPDIPNPY) match the Box 1 motif motif. Positions 818–840 (VGSGKLHTEDVPTKPPLVPTEKD) are disordered.

This sequence belongs to the type I cytokine receptor family. Type 2 subfamily. Heterodimer composed of OSMR and IL6ST (type II OSM receptor). Heterodimer with IL31RA to form the IL31 receptor. In terms of tissue distribution, widely expressed. Expressed at high levels in the liver, skin and spleen. In the liver it is expressed exclusively in the oval cells.

It is found in the membrane. Its function is as follows. Associates with IL31RA to form the IL31 receptor. Binds IL31 and activates STAT1, STAT3 and STAT5. Capable of transducing OSM-specific signaling events. The OSM/OSM-R system is pivotal in the differentiation of oval cells into hepatocytes, thereby promoting liver regeneration. The sequence is that of Oncostatin-M-specific receptor subunit beta (Osmr) from Rattus norvegicus (Rat).